A 179-amino-acid polypeptide reads, in one-letter code: Large ribosomal subunit protein uL5 (179 aa).

It belongs to the universal ribosomal protein uL5 family. Part of the 50S ribosomal subunit; part of the 5S rRNA/L5/L18/L25 subcomplex. Contacts the 5S rRNA and the P site tRNA. Forms a bridge to the 30S subunit in the 70S ribosome.

Functionally, this is one of the proteins that bind and probably mediate the attachment of the 5S RNA into the large ribosomal subunit, where it forms part of the central protuberance. In the 70S ribosome it contacts protein S13 of the 30S subunit (bridge B1b), connecting the 2 subunits; this bridge is implicated in subunit movement. Contacts the P site tRNA; the 5S rRNA and some of its associated proteins might help stabilize positioning of ribosome-bound tRNAs. This is Large ribosomal subunit protein uL5 from Dictyoglomus thermophilum (strain ATCC 35947 / DSM 3960 / H-6-12).